The following is a 746-amino-acid chain: Protein Niban 2 (746 aa).

G2 carries the N-myristoyl glycine lipid modification. The PH domain maps to 68–192 (RIVFSGNLFQ…WQAVLQDCIR (125 aa)). 4 positions are modified to phosphoserine: S568, S574, S601, and S603. A disordered region spans residues 590-746 (GEEYSNSGGG…EDSAGVQTEF (157 aa)). A Phosphothreonine modification is found at T606. Phosphoserine is present on residues S609, S624, S638, S641, S646, S665, S681, S692, and S696. Positions 671–693 (PLLNGAPAGESPQPKAAPEASSP) are enriched in low complexity. A compositionally biased stretch (polar residues) spans 720-746 (GEQVSSPSSHPALHTTTEDSAGVQTEF).

This sequence belongs to the Niban family. Post-translationally, phosphorylated at Ser-641, Ser-646, Ser-692 and Ser-696 by the BRAF/MKK/ERK signaling cascade. In melanoma cells, the C-terminal phosphorylation may prevent targeting to the plasma membrane. In terms of processing, as apoptosis proceeds, degraded via an proteasome-independent pathway, probably by caspases.

The protein localises to the cytoplasm. It localises to the cytosol. Its subcellular location is the cell junction. It is found in the adherens junction. The protein resides in the membrane. Functionally, may play a role in apoptosis suppression. May promote melanoma cell invasion in vitro. This is Protein Niban 2 from Homo sapiens (Human).